A 44-amino-acid polypeptide reads, in one-letter code: SPbeta prophage-derived uncharacterized protein YosI (44 aa).

This chain is SPbeta prophage-derived uncharacterized protein YosI (yosI), found in Bacillus subtilis (strain 168).